The primary structure comprises 156 residues: SsrA-binding protein (156 aa).

The protein belongs to the SmpB family.

The protein localises to the cytoplasm. Required for rescue of stalled ribosomes mediated by trans-translation. Binds to transfer-messenger RNA (tmRNA), required for stable association of tmRNA with ribosomes. tmRNA and SmpB together mimic tRNA shape, replacing the anticodon stem-loop with SmpB. tmRNA is encoded by the ssrA gene; the 2 termini fold to resemble tRNA(Ala) and it encodes a 'tag peptide', a short internal open reading frame. During trans-translation Ala-aminoacylated tmRNA acts like a tRNA, entering the A-site of stalled ribosomes, displacing the stalled mRNA. The ribosome then switches to translate the ORF on the tmRNA; the nascent peptide is terminated with the 'tag peptide' encoded by the tmRNA and targeted for degradation. The ribosome is freed to recommence translation, which seems to be the essential function of trans-translation. Required for trans-translation. Probably required for sporulation; deletion of the gene for tmRNA impairs sporulation via its effect on trans-translation, and as smpB is required for trans-translation under non-stress conditions, it is also probably required during sporulation. The sequence is that of SsrA-binding protein from Bacillus subtilis (strain 168).